We begin with the raw amino-acid sequence, 81 residues long: Acyl carrier protein (81 aa).

The region spanning 3 to 78 (QEIFEKVKSI…AAVDYIEKEQ (76 aa)) is the Carrier domain. Serine 38 carries the post-translational modification O-(pantetheine 4'-phosphoryl)serine.

This sequence belongs to the acyl carrier protein (ACP) family. In terms of processing, 4'-phosphopantetheine is transferred from CoA to a specific serine of apo-ACP by AcpS. This modification is essential for activity because fatty acids are bound in thioester linkage to the sulfhydryl of the prosthetic group.

It localises to the cytoplasm. Its pathway is lipid metabolism; fatty acid biosynthesis. Functionally, carrier of the growing fatty acid chain in fatty acid biosynthesis. This chain is Acyl carrier protein, found in Crocosphaera subtropica (strain ATCC 51142 / BH68) (Cyanothece sp. (strain ATCC 51142)).